The chain runs to 321 residues: Probable transaldolase (321 aa).

Catalysis depends on lysine 133, which acts as the Schiff-base intermediate with substrate.

Belongs to the transaldolase family. Type 1 subfamily. As to quaternary structure, homodimer.

The protein resides in the cytoplasm. It catalyses the reaction D-sedoheptulose 7-phosphate + D-glyceraldehyde 3-phosphate = D-erythrose 4-phosphate + beta-D-fructose 6-phosphate. It functions in the pathway carbohydrate degradation; pentose phosphate pathway; D-glyceraldehyde 3-phosphate and beta-D-fructose 6-phosphate from D-ribose 5-phosphate and D-xylulose 5-phosphate (non-oxidative stage): step 2/3. Transaldolase is important for the balance of metabolites in the pentose-phosphate pathway. This chain is Probable transaldolase (tal), found in Dictyostelium discoideum (Social amoeba).